The sequence spans 464 residues: NADH dehydrogenase [ubiquinone] flavoprotein 1, mitochondrial (464 aa).

Residues methionine 1 to phenylalanine 20 constitute a mitochondrion transit peptide. Lysine 81 carries the N6-acetyllysine; alternate modification. N6-succinyllysine; alternate is present on lysine 81. Glycine 87–glycine 96 provides a ligand contact to NADH. At lysine 104 the chain carries N6-acetyllysine. Arginine 199 to threonine 247 is an FMN binding site. Arginine 257 bears the Omega-N-methylarginine mark. Lysine 375 is subject to N6-acetyllysine. Positions 379, 382, 385, and 425 each coordinate [4Fe-4S] cluster.

It belongs to the complex I 51 kDa subunit family. As to quaternary structure, core subunit of respiratory chain NADH dehydrogenase (Complex I) which is composed of 45 different subunits. This is a component of the flavoprotein-sulfur (FP) fragment of the enzyme. Interacts with RAB5IF. It depends on FMN as a cofactor. The cofactor is [4Fe-4S] cluster.

It is found in the mitochondrion inner membrane. It catalyses the reaction a ubiquinone + NADH + 5 H(+)(in) = a ubiquinol + NAD(+) + 4 H(+)(out). Its function is as follows. Core subunit of the mitochondrial membrane respiratory chain NADH dehydrogenase (Complex I) which catalyzes electron transfer from NADH through the respiratory chain, using ubiquinone as an electron acceptor. Part of the peripheral arm of the enzyme, where the electrons from NADH are accepted by flavin mononucleotide (FMN) and then passed along a chain of iron-sulfur clusters by electron tunnelling to the final acceptor ubiquinone. Contains FMN, which is the initial electron acceptor as well as one iron-sulfur cluster. The chain is NADH dehydrogenase [ubiquinone] flavoprotein 1, mitochondrial from Homo sapiens (Human).